An 883-amino-acid chain; its full sequence is MALYREGKAAMAADGTVTGTGTKWQSSLSLIRPGATIMFLSSPIQMAVVNKVVSDTEIKAITTNGAVVASSDYAILLSDSLTVDGLAQDVAETLRYYQSQETVIADAVEFFKNFDFDSLQDLANQINADSESAQSSAAAAAASENAAKTSENNAKSSEVAAENARDQVQQIINDAGDASTLVVLANPDGFRHIGRCKDIATLRTIEPVESRQVIEVLSYYNGLAQGGGTFWYDPNDSVTEDNGGSCIVTNGGKRWKRIIDGAVDVLSFGAKPDDISFDSAPHIQAALDNHDAVSLYGRSYYIGSPIYMPSRTVFDGMGGKLTSIAPSTAGFMAGSIFAPGNYHPDFWEEVPKVAATTTLGSANITLADPNIVNVGDIIRLSSTTGVLSAGFFVSEYLQMARVLSKTGNVITIDGPVESQLTLVAANANQPGYLARFNKPLFCCVDSIIQNIEIDTWDYWTADSATYNVKFSNIWGSAKAVAYGNTFCRSLFEDIRIVFSGRVSELAFGSHDTNLVRITAIASPKGLSASVVFGWAESGRRCTIDTFSIMLNANANPSTVIRVSGHRDSLIKNGSIYVHNNTNNILSVENYGTTADGVRPDCDNITFENVSIFVTGSSAVVCDVYKSADNSVIKNVAFKNIKYFGPTPSVALYRARGTLANFVKGVQANISSDTGGAIVLSNSENNVLTFTGPVSVTSLVSAAAKNTLSIRNYARSSAKANNFTQESTLNVTDTTANAVSKEFTYPAGSLRINDKIKLSLGGSTAGTVGKKTVQVGFIGSDGAFKYVELAALATDQVYWTMEVEISFLRTTNSQTNELETSAIITSFLSKGAATGAALSGSRALAVVSDLALSNFVVQVRAWKENAADGLSLSRMNLQLEDLTA.

Over residues 137–157 (AAAAAASENAAKTSENNAKSS) the composition is skewed to low complexity. A disordered region spans residues 137-161 (AAAAAASENAAKTSENNAKSSEVAA).

This sequence in the N-terminal section; belongs to the Webervirus depolymerase family. It in the C-terminal section; belongs to the K63-specific depolymerase family. As to quaternary structure, homotrimer.

It localises to the virion. Functions as a receptor binding protein (RBP) and probably mediates the attachment to the host capsular exopolysaccharides. Displays a depolymerase activity that specifically degrades the K63-type polysaccharides of Klebsiella pneumoniae capsule, which allows the phage to reach the host cell membrane and bind the entry receptor. The protein is Depolymerase, capsule K63-specific of Klebsiella phage KP36 (Bacteriophage KP36).